Consider the following 519-residue polypeptide: MRPLVFDNRFVRELPADPETGPHTRQVAGASYSRVNPTPVAAPHLVAHSAEVAALLGWDESDIASPEFAEVFGGNRLLDGMEPYAACYGGHQFGNWAGQLGDGRAITLGEVLNGQGGRWELQLKGAGPTPYSRRADGRAVLRSSIREFLCSEAMHHLGVPTTRALSLVGTGEKVVRDMFYDGNPQAEPGAIVCRVAPSFIRFGNFELLAARGDLDLLNRLIDFTIARDFPGIEGSARDKRARWFETVCARTATMVAHWMRVGFVHGVMNTDNMSILGLTIDYGPYGWVDNFDPGWTPNTTDAGGRRYRFGHQPRIANWNLLQLANALFPAFGSTEALQAGLNTYAEVYDRESRAMTAAKLGLAALADADLPMVDALHGWMKRAEVDMTLFFRALAEVDLLKPDPALFLDAFYDDAKRLETAEEFSGWLRLYADRCRQEGLDADQRRARMNAANPRYVMRNYLAQQAIDAAEQGDYGPVRSLLDVMRRPYDEQPERAAYAQRRPDWARERAGCSMLSCSS.

ATP-binding residues include glycine 101, glycine 103, arginine 104, lysine 124, aspartate 136, glycine 137, arginine 194, and arginine 201. The active-site Proton acceptor is the aspartate 271. Residues asparagine 272 and aspartate 281 each coordinate Mg(2+). Aspartate 281 lines the ATP pocket.

Belongs to the SELO family. It depends on Mg(2+) as a cofactor. Mn(2+) serves as cofactor.

It catalyses the reaction L-seryl-[protein] + ATP = 3-O-(5'-adenylyl)-L-seryl-[protein] + diphosphate. It carries out the reaction L-threonyl-[protein] + ATP = 3-O-(5'-adenylyl)-L-threonyl-[protein] + diphosphate. The catalysed reaction is L-tyrosyl-[protein] + ATP = O-(5'-adenylyl)-L-tyrosyl-[protein] + diphosphate. The enzyme catalyses L-histidyl-[protein] + UTP = N(tele)-(5'-uridylyl)-L-histidyl-[protein] + diphosphate. It catalyses the reaction L-seryl-[protein] + UTP = O-(5'-uridylyl)-L-seryl-[protein] + diphosphate. It carries out the reaction L-tyrosyl-[protein] + UTP = O-(5'-uridylyl)-L-tyrosyl-[protein] + diphosphate. Its function is as follows. Nucleotidyltransferase involved in the post-translational modification of proteins. It can catalyze the addition of adenosine monophosphate (AMP) or uridine monophosphate (UMP) to a protein, resulting in modifications known as AMPylation and UMPylation. This is Protein nucleotidyltransferase YdiU from Azoarcus sp. (strain BH72).